Here is a 172-residue protein sequence, read N- to C-terminus: Ribosome maturation factor RimM (172 aa).

The PRC barrel domain occupies 96–168; it reads DGEFYYHEII…RIDVTVLEGL (73 aa).

Belongs to the RimM family. In terms of assembly, binds ribosomal protein uS19.

It is found in the cytoplasm. Its function is as follows. An accessory protein needed during the final step in the assembly of 30S ribosomal subunit, possibly for assembly of the head region. Essential for efficient processing of 16S rRNA. May be needed both before and after RbfA during the maturation of 16S rRNA. It has affinity for free ribosomal 30S subunits but not for 70S ribosomes. This chain is Ribosome maturation factor RimM, found in Streptococcus mutans serotype c (strain ATCC 700610 / UA159).